The primary structure comprises 404 residues: Type I restriction enzyme EcoR124I/EcoR124II specificity subunit (404 aa).

The segment at 1 to 153 is target-recognition domain 1; that stretch reads MSEMSYLEKL…PIPCPDNPEK (153 aa). The interval 154-199 is conserved region 1; sequence SLAIQSEIVRILDKFTALTAELTAELNMRKKQYNYYRDQLLSFKEG. The segment at 200-349 is target-recognition domain 2; sequence EVEWKTLGEI…KLFSFKIPVP (150 aa). The interval 350–404 is conserved region 2; that stretch reads NINEQQRIVEILDKFDTLTNSITEGLPREIELRQKQYEYYRDLLFSFPKPETVSN.

Belongs to the type-I restriction system S methylase family. The type I restriction/modification system is composed of three polypeptides R, M and S; the restriction enzyme has stoichiometry R(2)M(2)S(1) while the methyltransferase is M(2)S(1). There is an equilibrium between R(2)M(2)S(1) and R(1)M(2)S(1); the latter is methylation and translocation proficient but restriction deficient. In terms of assembly, (Microbial infection) Holoenenzyme interacts with Escherichia phage T7 protein Ocr; this interaction leads to the inhibition of the restriction activity, but may still allow methylation and translocation.

Functionally, the specificity (S) subunit of a type I restriction enzyme; this subunit dictates DNA sequence specificity. The presence or absence of a 4-residue repeat changes the sequence specificity; a third copy of TAEL inserted at position 179-180 changes the recognition site from 5'-GAAN(6)RTCG-3' (for EcoR124I) to 5'-GAAN(7)RTCG-3' (for EcoR124II). The M and S subunits together form a methyltransferase (MTase) that methylates A-3 on the top and bottom strand of the sequence 5'-GAAN(7)RTCG-3'. In the presence of the R subunit the complex can also act as an endonuclease, binding to the same target sequence but cutting the DNA some distance from this site. Whether the DNA is cut or modified depends on the methylation state of the target sequence. When the target site is unmodified, the DNA is cut. When the target site is hemimethylated, the complex acts as a maintenance MTase modifying the DNA so that both strands become methylated. After locating a non-methylated recognition site, the enzyme complex serves as a molecular motor that translocates DNA in an ATP-dependent manner until a collision occurs that triggers cleavage. The R(1)M(2)S(1) complex translocates an average of 555 bp/second on nicked DNA; the R(2)M(2)S(1) complex translocates at double that speed. The 2 R subunit motors are independent and track along the helical pitch of the DNA, inducing positive supercoiling ahead of themselves. In Escherichia coli, this protein is Type I restriction enzyme EcoR124I/EcoR124II specificity subunit (hsdS).